Consider the following 743-residue polypeptide: Keratin, type I cytoskeletal 9 (743 aa).

The segment covering 1 to 16 (MSCRQSSSSFWSSSSS) has biased composition (low complexity). The tract at residues 1 to 46 (MSCRQSSSSFWSSSSSCGGGGGRGGSGGSMRSSFSRSSRAGGGGGG) is disordered. Positions 1–130 (MSCRQSSSSF…GGEGGILNTN (130 aa)) are head. Ser14 and Ser16 each carry phosphoserine. The span at 17–28 (CGGGGGRGGSGG) shows a compositional bias: gly residues. Low complexity predominate over residues 29–39 (SMRSSFSRSSR). Phosphoserine is present on residues Ser55 and Ser155. Residues 131-166 (EKIVMQNLNSRLASYMEKVLELEESNTAMEKQIQDW) are coil 1A. Positions 131 to 443 (EKIVMQNLNS…ELLEGGQQDF (313 aa)) constitute an IF rod domain. A linker 1 region spans residues 167–185 (YSKRGPKVFQKDNTHYYDT). Residues 186–277 (IEDLKDRIVD…KNHKEEMSQL (92 aa)) form a coil 1B region. Residues 278 to 300 (TGQNDGDVNVEINVAPSTDLTRV) are linker 12. Positions 301–439 (LNDMREEYEQ…ETYRELLEGG (139 aa)) are coil 2. Disordered stretches follow at residues 440 to 468 (QQDF…GSYG) and 501 to 743 (GGSG…KMRY). Residues 440 to 709 (QQDFESSGAG…GGGSGSGGGS (270 aa)) are tail. Composition is skewed to gly residues over residues 449-468 (GQIG…GSYG) and 501-717 (GGSG…GGGN).

The protein belongs to the intermediate filament family. As to quaternary structure, heterotetramer of two type I and two type II keratins. As to expression, expressed in footpad epidermis and testis (at protein level).

May serve an important special function either in the mature palmar and plantar skin tissue or in the morphogenetic program of the formation of these tissues. Plays a role in keratin filament assembly. Plays an essential role in the correct development of sperm. In Mus musculus (Mouse), this protein is Keratin, type I cytoskeletal 9.